A 124-amino-acid polypeptide reads, in one-letter code: uncharacterized protein (124 aa).

This is an uncharacterized protein from Magallana gigas (Pacific oyster).